A 169-amino-acid chain; its full sequence is Centrosomal protein 20 (169 aa).

Residues 1-104 are necessary and sufficient for homooligomerization and localization to centrosomes and pericentriolar satellites; the sequence is MATVGDLKAV…VVEDLNSQSV (104 aa). The 33-residue stretch at 49 to 81 folds into the LisH domain; that stretch reads ENLLINELIREYLAFNKYSYTSSVLTAETGLSE. Positions 135 to 169 are disordered; that stretch reads TFRNIPRGRNTKDTHSGPVQLTQTSTEDWHQRRHR. Residues 151–160 show a composition bias toward polar residues; that stretch reads GPVQLTQTST.

This sequence belongs to the CEP43 family. In terms of assembly, homooligomer; probably required for localization to centrosomes.

The protein localises to the cell projection. The protein resides in the cilium. Its subcellular location is the cytoplasm. It localises to the cytoskeleton. It is found in the cilium basal body. The protein localises to the microtubule organizing center. The protein resides in the centrosome. Its subcellular location is the cytoplasmic granule. It localises to the centriolar satellite. In terms of biological role, involved in the biogenesis of cilia. Required for the recruitment of PLK1 to centrosomes and S phase progression. This chain is Centrosomal protein 20 (Cep20), found in Xenopus laevis (African clawed frog).